The sequence spans 145 residues: Aspartate 1-decarboxylase (145 aa).

Ser26 serves as the catalytic Schiff-base intermediate with substrate; via pyruvic acid. Residue Ser26 is modified to Pyruvic acid (Ser). Thr58 is a binding site for substrate. The active-site Proton donor is the Tyr59. 74–76 contributes to the substrate binding site; sequence GGA.

Belongs to the PanD family. In terms of assembly, heterooctamer of four alpha and four beta subunits. Requires pyruvate as cofactor. In terms of processing, is synthesized initially as an inactive proenzyme, which is activated by self-cleavage at a specific serine bond to produce a beta-subunit with a hydroxyl group at its C-terminus and an alpha-subunit with a pyruvoyl group at its N-terminus.

Its subcellular location is the cytoplasm. The enzyme catalyses L-aspartate + H(+) = beta-alanine + CO2. It functions in the pathway cofactor biosynthesis; (R)-pantothenate biosynthesis; beta-alanine from L-aspartate: step 1/1. Its function is as follows. Catalyzes the pyruvoyl-dependent decarboxylation of aspartate to produce beta-alanine. In Synechocystis sp. (strain ATCC 27184 / PCC 6803 / Kazusa), this protein is Aspartate 1-decarboxylase.